A 365-amino-acid chain; its full sequence is Chorismate synthase (365 aa).

NADP(+) is bound by residues arginine 48 and arginine 54. Residues 125-127, 238-239, glycine 278, 293-297, and arginine 319 contribute to the FMN site; these read RSS, NA, and KPTSS.

This sequence belongs to the chorismate synthase family. Homotetramer. Requires FMNH2 as cofactor.

The catalysed reaction is 5-O-(1-carboxyvinyl)-3-phosphoshikimate = chorismate + phosphate. The protein operates within metabolic intermediate biosynthesis; chorismate biosynthesis; chorismate from D-erythrose 4-phosphate and phosphoenolpyruvate: step 7/7. Functionally, catalyzes the anti-1,4-elimination of the C-3 phosphate and the C-6 proR hydrogen from 5-enolpyruvylshikimate-3-phosphate (EPSP) to yield chorismate, which is the branch point compound that serves as the starting substrate for the three terminal pathways of aromatic amino acid biosynthesis. This reaction introduces a second double bond into the aromatic ring system. The sequence is that of Chorismate synthase from Vesicomyosocius okutanii subsp. Calyptogena okutanii (strain HA).